Consider the following 81-residue polypeptide: Photosystem I iron-sulfur center (81 aa).

2 consecutive 4Fe-4S ferredoxin-type domains span residues 2 to 31 (AHTV…MVPW) and 39 to 68 (MASA…IRVY). Positions 11, 14, 17, 21, 48, 51, 54, and 58 each coordinate [4Fe-4S] cluster.

In terms of assembly, the eukaryotic PSI reaction center is composed of at least 11 subunits. [4Fe-4S] cluster serves as cofactor.

The protein resides in the plastid. Its subcellular location is the chloroplast thylakoid membrane. The enzyme catalyses reduced [plastocyanin] + hnu + oxidized [2Fe-2S]-[ferredoxin] = oxidized [plastocyanin] + reduced [2Fe-2S]-[ferredoxin]. In terms of biological role, apoprotein for the two 4Fe-4S centers FA and FB of photosystem I (PSI); essential for photochemical activity. FB is the terminal electron acceptor of PSI, donating electrons to ferredoxin. The C-terminus interacts with PsaA/B/D and helps assemble the protein into the PSI complex. Required for binding of PsaD and PsaE to PSI. PSI is a plastocyanin/cytochrome c6-ferredoxin oxidoreductase, converting photonic excitation into a charge separation, which transfers an electron from the donor P700 chlorophyll pair to the spectroscopically characterized acceptors A0, A1, FX, FA and FB in turn. The protein is Photosystem I iron-sulfur center of Cyanidioschyzon merolae (strain NIES-3377 / 10D) (Unicellular red alga).